The primary structure comprises 120 residues: Large ribosomal subunit protein bL36m (120 aa).

It belongs to the bacterial ribosomal protein bL36 family. In terms of assembly, component of the mitochondrial ribosome large subunit (39S) which comprises a 16S rRNA and about 50 distinct proteins.

It is found in the mitochondrion. The sequence is that of Large ribosomal subunit protein bL36m (mrpl36) from Osmerus mordax (Rainbow smelt).